A 335-amino-acid polypeptide reads, in one-letter code: DNA-directed RNA polymerase subunit alpha (335 aa).

Residues 1–233 are alpha N-terminal domain (alpha-NTD); the sequence is MTRTANEFLT…QQIAIFVDLQ (233 aa). The alpha C-terminal domain (alpha-CTD) stretch occupies residues 247–335; the sequence is VDPILLRPVD…MDDRFAYRSR (89 aa).

Belongs to the RNA polymerase alpha chain family. In terms of assembly, homodimer. The RNAP catalytic core consists of 2 alpha, 1 beta, 1 beta' and 1 omega subunit. When a sigma factor is associated with the core the holoenzyme is formed, which can initiate transcription.

The enzyme catalyses RNA(n) + a ribonucleoside 5'-triphosphate = RNA(n+1) + diphosphate. DNA-dependent RNA polymerase catalyzes the transcription of DNA into RNA using the four ribonucleoside triphosphates as substrates. This chain is DNA-directed RNA polymerase subunit alpha, found in Acinetobacter baylyi (strain ATCC 33305 / BD413 / ADP1).